The following is a 213-amino-acid chain: Uracil phosphoribosyltransferase (213 aa).

5-phospho-alpha-D-ribose 1-diphosphate contacts are provided by residues arginine 78, arginine 103, and 130-138; that span reads DPMLATGGT. Residues isoleucine 197 and 202 to 204 contribute to the uracil site; that span reads GDA. Residue aspartate 203 participates in 5-phospho-alpha-D-ribose 1-diphosphate binding.

Belongs to the UPRTase family. The cofactor is Mg(2+).

The enzyme catalyses UMP + diphosphate = 5-phospho-alpha-D-ribose 1-diphosphate + uracil. The protein operates within pyrimidine metabolism; UMP biosynthesis via salvage pathway; UMP from uracil: step 1/1. Allosterically activated by GTP. Its function is as follows. Catalyzes the conversion of uracil and 5-phospho-alpha-D-ribose 1-diphosphate (PRPP) to UMP and diphosphate. The chain is Uracil phosphoribosyltransferase from Nocardioides sp. (strain ATCC BAA-499 / JS614).